A 130-amino-acid chain; its full sequence is Small ribosomal subunit protein uS9 (130 aa).

This sequence belongs to the universal ribosomal protein uS9 family.

The chain is Small ribosomal subunit protein uS9 from Lawsonia intracellularis (strain PHE/MN1-00).